Consider the following 452-residue polypeptide: MTARNSLTIVLAAGEGTRMRSSLPKVLNPVAGRSLLAHVLSAAPHGERDRLAVVIGPDHRAVGDEAKRVRSDAAIHIQAQRLGTAHAVLAAREAIAEGADDLLIAFGDTPLISAETFARLREPLHDGSSLVVLGFRAADPTGYGRLVVQDGKLTAIREQADASADELKITLCNAGVMAIDGKIALDVLDKIGNANAKGEYYLTDAVGIVRDLGLIASVIETSEDEVRGINTKAQLAEAETVMQTRLRLAAMAAGVTLIAPETVYLAADTTFGKDVVIEPFVVIGPGVSIADGAVIHSFSHLAEAKIGSKAQVGPYARLRPGTSLGDGAKIGNFVETKAAQIDAGAKVNHLTYIGDAHIGASANIGAGTITCNYDGFDKHKTEIGAGAFIGSNSSLVAPVKIGTGAYVGSGSVITKDVPDDALAVERNVQTAKDGWAKRFRDAKSRHRKPKAH.

Positions 1–232 (MTARNSLTIV…EDEVRGINTK (232 aa)) are pyrophosphorylase. UDP-N-acetyl-alpha-D-glucosamine-binding positions include 11–14 (LAAG), lysine 25, glutamine 78, and 83–84 (GT). Aspartate 108 contacts Mg(2+). Residues glycine 144, glutamate 158, asparagine 173, and asparagine 230 each coordinate UDP-N-acetyl-alpha-D-glucosamine. Asparagine 230 contacts Mg(2+). Residues 233-253 (AQLAEAETVMQTRLRLAAMAA) form a linker region. The segment at 254–452 (GVTLIAPETV…KSRHRKPKAH (199 aa)) is N-acetyltransferase. The UDP-N-acetyl-alpha-D-glucosamine site is built by arginine 319 and lysine 337. Catalysis depends on histidine 349, which acts as the Proton acceptor. Positions 352 and 363 each coordinate UDP-N-acetyl-alpha-D-glucosamine. Residues alanine 366, 372–373 (NY), serine 391, serine 409, and arginine 426 each bind acetyl-CoA.

This sequence in the N-terminal section; belongs to the N-acetylglucosamine-1-phosphate uridyltransferase family. In the C-terminal section; belongs to the transferase hexapeptide repeat family. Homotrimer. Requires Mg(2+) as cofactor.

The protein localises to the cytoplasm. The catalysed reaction is alpha-D-glucosamine 1-phosphate + acetyl-CoA = N-acetyl-alpha-D-glucosamine 1-phosphate + CoA + H(+). It catalyses the reaction N-acetyl-alpha-D-glucosamine 1-phosphate + UTP + H(+) = UDP-N-acetyl-alpha-D-glucosamine + diphosphate. It functions in the pathway nucleotide-sugar biosynthesis; UDP-N-acetyl-alpha-D-glucosamine biosynthesis; N-acetyl-alpha-D-glucosamine 1-phosphate from alpha-D-glucosamine 6-phosphate (route II): step 2/2. It participates in nucleotide-sugar biosynthesis; UDP-N-acetyl-alpha-D-glucosamine biosynthesis; UDP-N-acetyl-alpha-D-glucosamine from N-acetyl-alpha-D-glucosamine 1-phosphate: step 1/1. The protein operates within bacterial outer membrane biogenesis; LPS lipid A biosynthesis. Functionally, catalyzes the last two sequential reactions in the de novo biosynthetic pathway for UDP-N-acetylglucosamine (UDP-GlcNAc). The C-terminal domain catalyzes the transfer of acetyl group from acetyl coenzyme A to glucosamine-1-phosphate (GlcN-1-P) to produce N-acetylglucosamine-1-phosphate (GlcNAc-1-P), which is converted into UDP-GlcNAc by the transfer of uridine 5-monophosphate (from uridine 5-triphosphate), a reaction catalyzed by the N-terminal domain. The protein is Bifunctional protein GlmU of Rhodopseudomonas palustris (strain TIE-1).